The sequence spans 117 residues: UPF0102 protein Swoo_0351 (117 aa).

Belongs to the UPF0102 family.

The protein is UPF0102 protein Swoo_0351 of Shewanella woodyi (strain ATCC 51908 / MS32).